A 436-amino-acid polypeptide reads, in one-letter code: Arginine biosynthesis bifunctional protein ArgJ, mitochondrial (436 aa).

6 residues coordinate substrate: T172, K198, T209, E298, N431, and S436. Catalysis depends on T209, which acts as the Nucleophile.

The protein belongs to the ArgJ family. Heterodimer of an alpha and a beta chain. The alpha and beta chains are autoproteolytically processed from a single precursor protein within the mitochondrion.

It is found in the mitochondrion matrix. The catalysed reaction is N(2)-acetyl-L-ornithine + L-glutamate = N-acetyl-L-glutamate + L-ornithine. It carries out the reaction L-glutamate + acetyl-CoA = N-acetyl-L-glutamate + CoA + H(+). It participates in amino-acid biosynthesis; L-arginine biosynthesis; L-ornithine and N-acetyl-L-glutamate from L-glutamate and N(2)-acetyl-L-ornithine (cyclic): step 1/1. The protein operates within amino-acid biosynthesis; L-arginine biosynthesis; N(2)-acetyl-L-ornithine from L-glutamate: step 1/4. Catalyzes two activities which are involved in the cyclic version of arginine biosynthesis: the synthesis of acetylglutamate from glutamate and acetyl-CoA, and of ornithine by transacetylation between acetylornithine and glutamate. This chain is Arginine biosynthesis bifunctional protein ArgJ, mitochondrial, found in Meyerozyma guilliermondii (strain ATCC 6260 / CBS 566 / DSM 6381 / JCM 1539 / NBRC 10279 / NRRL Y-324) (Yeast).